The sequence spans 277 residues: Phycobilisome rod-core linker polypeptide CpcG1 (277 aa).

In terms of domain architecture, PBS-linker spans 11–189 (RTLDQRVVSY…YWRNKEISLS (179 aa)).

It belongs to the phycobilisome linker protein family. As to quaternary structure, the phycobilisome is a hemidiscoidal structure that is composed of two distinct substructures: a core complex and a number of rods radiating from the core.

It is found in the cellular thylakoid membrane. In terms of biological role, rod-core linker protein required for attachment of phycocyanin to allophycocyanin in cores of phycobilisomes. Functionally, linker polypeptides determine the state of aggregation and the location of the disk-shaped phycobiliprotein units within the phycobilisome and modulate their spectroscopic properties in order to mediate a directed and optimal energy transfer. This chain is Phycobilisome rod-core linker polypeptide CpcG1 (cpcG1), found in Thermosynechococcus vestitus (strain NIES-2133 / IAM M-273 / BP-1).